A 472-amino-acid polypeptide reads, in one-letter code: Adenosylhomocysteinase (472 aa).

The substrate site is built by Thr-62, Asp-137, and Glu-197. 198 to 200 is a binding site for NAD(+); it reads TTT. Positions 227 and 231 each coordinate substrate. Residues Asn-232, 261 to 266, Glu-284, Asn-319, 340 to 342, and Asn-385 contribute to the NAD(+) site; these read GYGDVG and IGH.

It belongs to the adenosylhomocysteinase family. NAD(+) serves as cofactor.

The protein resides in the cytoplasm. The enzyme catalyses S-adenosyl-L-homocysteine + H2O = L-homocysteine + adenosine. The protein operates within amino-acid biosynthesis; L-homocysteine biosynthesis; L-homocysteine from S-adenosyl-L-homocysteine: step 1/1. Its function is as follows. May play a key role in the regulation of the intracellular concentration of adenosylhomocysteine. The protein is Adenosylhomocysteinase of Bordetella petrii (strain ATCC BAA-461 / DSM 12804 / CCUG 43448).